Here is a 408-residue protein sequence, read N- to C-terminus: Serine/threonine transporter SstT (408 aa).

Helical transmembrane passes span 11 to 31 (LANG…VSLA), 43 to 63 (FLGS…VFIL), 82 to 102 (IVVL…LLSM), 141 to 161 (ALMT…GLAL), 192 to 212 (IGIF…AIAG), 216 to 236 (LLAV…PLIV), 298 to 318 (MGGA…TLGI), 339 to 359 (ASGV…LFGI), and 363 to 383 (VAMQ…AAET).

Belongs to the dicarboxylate/amino acid:cation symporter (DAACS) (TC 2.A.23) family.

It localises to the cell inner membrane. It catalyses the reaction L-serine(in) + Na(+)(in) = L-serine(out) + Na(+)(out). It carries out the reaction L-threonine(in) + Na(+)(in) = L-threonine(out) + Na(+)(out). Functionally, involved in the import of serine and threonine into the cell, with the concomitant import of sodium (symport system). In Shewanella sp. (strain MR-7), this protein is Serine/threonine transporter SstT.